The following is a 355-amino-acid chain: Serum paraoxonase/arylesterase 1 (355 aa).

A disulfide bond links cysteine 42 and cysteine 353. Glutamate 53 and aspartate 54 together coordinate Ca(2+). Histidine 115 functions as the Proton acceptor in the catalytic mechanism. Ca(2+)-binding residues include isoleucine 117, asparagine 168, aspartate 169, and asparagine 224. Asparagine 253 carries N-linked (GlcNAc...) asparagine glycosylation. Residues aspartate 269 and asparagine 270 each coordinate Ca(2+). Residues asparagine 270 and asparagine 324 are each glycosylated (N-linked (GlcNAc...) asparagine).

This sequence belongs to the paraoxonase family. Homodimer. Interacts with CLU. Ca(2+) is required as a cofactor. In terms of processing, the signal sequence is not cleaved. As to expression, plasma, liver, kidney, heart, brain, small intestine and lung. In the plasma, associated with HDL.

Its subcellular location is the secreted. The protein resides in the extracellular space. The catalysed reaction is a phenyl acetate + H2O = a phenol + acetate + H(+). The enzyme catalyses An aryl dialkyl phosphate + H2O = dialkyl phosphate + an aryl alcohol.. It carries out the reaction an N-acyl-L-homoserine lactone + H2O = an N-acyl-L-homoserine + H(+). Its function is as follows. Hydrolyzes the toxic metabolites of a variety of organophosphorus insecticides. Capable of hydrolyzing a broad spectrum of organophosphate substrates and lactones, and a number of aromatic carboxylic acid esters. Mediates an enzymatic protection of low density lipoproteins against oxidative modification. The chain is Serum paraoxonase/arylesterase 1 (Pon1) from Mus musculus (Mouse).